The sequence spans 258 residues: Small ribosomal subunit protein uS3 (258 aa).

The KH type-2 domain occupies 43-111 (IRKLMSTGLE…QVQLNILEVK (69 aa)). The tract at residues 217–258 (AREQASAAPRARGRADRPRGRRDEGAAPQQAAAPAATTGTEA) is disordered. Residues 229–241 (GRADRPRGRRDEG) show a composition bias toward basic and acidic residues. Residues 242–258 (AAPQQAAAPAATTGTEA) show a composition bias toward low complexity.

The protein belongs to the universal ribosomal protein uS3 family. Part of the 30S ribosomal subunit. Forms a tight complex with proteins S10 and S14.

Its function is as follows. Binds the lower part of the 30S subunit head. Binds mRNA in the 70S ribosome, positioning it for translation. This Beutenbergia cavernae (strain ATCC BAA-8 / DSM 12333 / CCUG 43141 / JCM 11478 / NBRC 16432 / NCIMB 13614 / HKI 0122) protein is Small ribosomal subunit protein uS3.